A 213-amino-acid polypeptide reads, in one-letter code: Kynurenine formamidase (213 aa).

Tryptophan 18 is a substrate binding site. Residues histidine 48, histidine 52, and aspartate 54 each contribute to the Zn(2+) site. Histidine 58 acts as the Proton donor/acceptor in catalysis. Residues histidine 160 and glutamate 172 each coordinate Zn(2+).

This sequence belongs to the Cyclase 1 superfamily. KynB family. Homodimer. The cofactor is Zn(2+).

It catalyses the reaction N-formyl-L-kynurenine + H2O = L-kynurenine + formate + H(+). Its pathway is amino-acid degradation; L-tryptophan degradation via kynurenine pathway; L-kynurenine from L-tryptophan: step 2/2. Catalyzes the hydrolysis of N-formyl-L-kynurenine to L-kynurenine, the second step in the kynurenine pathway of tryptophan degradation. This Burkholderia multivorans (strain ATCC 17616 / 249) protein is Kynurenine formamidase.